A 140-amino-acid polypeptide reads, in one-letter code: uncharacterized protein (140 aa).

The interval Thr62–Gly140 is disordered. Positions Pro71–Ser94 are enriched in low complexity.

This is an uncharacterized protein from Homo sapiens (Human).